The chain runs to 201 residues: IDLSRF-like peptide (201 aa).

Residues 1–28 (MVRRFCNGAVALGIALTACAAFPRAIMA) form the signal peptide. The propeptide occupies 43-201 (SDACHPYEPF…EKLVKTGFLD (159 aa)). In terms of domain architecture, LDL-receptor class A spans 45–85 (ACHPYEPFKCPGDGLCISIQYLCDGAPDCQDGYDEDSRLCT). Disulfide bonds link C46/C60, C54/C73, and C67/C84.

As to expression, expressed in central brain, antennal and optical lobes, in gnathal, thoracic and abdominal ganglia and in the retrocerebral complex (at protein level).

It localises to the secreted. This is IDLSRF-like peptide from Camponotus floridanus (Florida carpenter ant).